The chain runs to 337 residues: Ribosomal RNA small subunit methyltransferase H (337 aa).

S-adenosyl-L-methionine contacts are provided by residues 36–38 (GGH), Asp-56, Phe-82, Asp-100, and Gln-107. The tract at residues 317-337 (RRSGRIPNPQSPIPASQGDAR) is disordered.

It belongs to the methyltransferase superfamily. RsmH family.

The protein resides in the cytoplasm. It carries out the reaction cytidine(1402) in 16S rRNA + S-adenosyl-L-methionine = N(4)-methylcytidine(1402) in 16S rRNA + S-adenosyl-L-homocysteine + H(+). Specifically methylates the N4 position of cytidine in position 1402 (C1402) of 16S rRNA. This chain is Ribosomal RNA small subunit methyltransferase H, found in Xanthomonas oryzae pv. oryzae (strain KACC10331 / KXO85).